Here is a 199-residue protein sequence, read N- to C-terminus: MAKSAEVKLAIFGRAGVGKSALVVRFLTKRFIWEYDPTLESTYRHQATIDDEVVSMEILDTAGQEDTIQREGHMRWGEGFVLVYDITDRGSFEEVLPLKNILDEIKKPKNVTLILVGNKADLDHSRQVSTEEGEKLATELACAFYECSACTGEGNITEIFYELCREVRRRRMVQGKTRRRSSTTHVKQAINKMLTKISS.

GTP contacts are provided by residues 13 to 20 (GRAGVGKS), 60 to 64 (DTAGQ), and 118 to 121 (NKAD).

The protein belongs to the small GTPase superfamily. Ras family. In terms of tissue distribution, detected in heart, brain, placenta, lung, liver, skin, kidney and pancreas. Detected in estrogen receptor-positive breast-derived cell lines, but not in estrogen receptor-negative cell lines. Expression is decreased or lost in a significant proportion of primary breast tumors with poor clinical prognosis.

Its subcellular location is the cytoplasm. It catalyses the reaction GTP + H2O = GDP + phosphate + H(+). In terms of biological role, binds GDP/GTP and possesses intrinsic GTPase activity. Has higher affinity for GDP than for GTP. In cell lines overexpression leads to a reduction in the rate of proliferation, colony formation and in tumorigenic potential. The chain is Ras-related and estrogen-regulated growth inhibitor (RERG) from Homo sapiens (Human).